The following is a 303-amino-acid chain: Cilia- and flagella-associated protein 161 (303 aa).

In terms of assembly, microtubule inner protein component of sperm flagellar doublet microtubules.

The protein resides in the cytoplasm. It localises to the cytoskeleton. It is found in the cilium axoneme. Its subcellular location is the flagellum axoneme. Functionally, microtubule inner protein (MIP) part of the dynein-decorated doublet microtubules (DMTs) in cilia axoneme, which is required for motile cilia beating. In Mus musculus (Mouse), this protein is Cilia- and flagella-associated protein 161.